Here is a 490-residue protein sequence, read N- to C-terminus: Glutamyl-tRNA(Gln) amidotransferase subunit A (490 aa).

Residues lysine 78 and serine 153 each act as charge relay system in the active site. The active-site Acyl-ester intermediate is the serine 177.

The protein belongs to the amidase family. GatA subfamily. As to quaternary structure, heterotrimer of A, B and C subunits.

It catalyses the reaction L-glutamyl-tRNA(Gln) + L-glutamine + ATP + H2O = L-glutaminyl-tRNA(Gln) + L-glutamate + ADP + phosphate + H(+). Allows the formation of correctly charged Gln-tRNA(Gln) through the transamidation of misacylated Glu-tRNA(Gln) in organisms which lack glutaminyl-tRNA synthetase. The reaction takes place in the presence of glutamine and ATP through an activated gamma-phospho-Glu-tRNA(Gln). The sequence is that of Glutamyl-tRNA(Gln) amidotransferase subunit A from Desulforapulum autotrophicum (strain ATCC 43914 / DSM 3382 / VKM B-1955 / HRM2) (Desulfobacterium autotrophicum).